Here is a 150-residue protein sequence, read N- to C-terminus: Putative esterase VC_A0580 (150 aa).

This sequence belongs to the thioesterase PaaI family.

The polypeptide is Putative esterase VC_A0580 (Vibrio cholerae serotype O1 (strain ATCC 39315 / El Tor Inaba N16961)).